Here is a 418-residue protein sequence, read N- to C-terminus: Histidine--tRNA ligase (418 aa).

It belongs to the class-II aminoacyl-tRNA synthetase family. Homodimer.

It localises to the cytoplasm. It catalyses the reaction tRNA(His) + L-histidine + ATP = L-histidyl-tRNA(His) + AMP + diphosphate + H(+). This Thermoanaerobacter sp. (strain X514) protein is Histidine--tRNA ligase.